The primary structure comprises 310 residues: MSYASDVKKELTNLAVHRENAKAELMALIRMNGAISIANHHFILNIQTENPAIARRIYRLLKQFYDVDSELIVRRKMKLNKNNLYIVRLKTGTDMVLADLGILKDYQIVEVAPTEVLTDDAAVRSYLRGAFLAGGSVNNPETSRYHLEIYSLYEEHNHMISEMMNQYGLNSRTTDRRGGFITYIKEAEKIADFLSLVGATNAMLKFEDIRIMRDMRNSVNRLVNCENANMDKVANASSKQIENILLIDATVGLQQLPPKLQEVAVARLEHREVSLKELGTLVPGGPISKSGINHRLRKINQFAEQLQKDA.

A DNA-binding region (H-T-H motif) is located at residues 274–308; sequence SLKELGTLVPGGPISKSGINHRLRKINQFAEQLQK.

It belongs to the WhiA family.

Involved in cell division and chromosome segregation. The protein is Probable cell division protein WhiA of Lactiplantibacillus plantarum (strain ATCC BAA-793 / NCIMB 8826 / WCFS1) (Lactobacillus plantarum).